The chain runs to 864 residues: Leucine--tRNA ligase (864 aa).

The 'HIGH' region signature appears at 42-52 (PYPSGKLHMGH). The 'KMSKS' region motif lies at 624 to 628 (KMSKS). Residue lysine 627 participates in ATP binding.

It belongs to the class-I aminoacyl-tRNA synthetase family.

The protein resides in the cytoplasm. It carries out the reaction tRNA(Leu) + L-leucine + ATP = L-leucyl-tRNA(Leu) + AMP + diphosphate. The protein is Leucine--tRNA ligase of Burkholderia ambifaria (strain ATCC BAA-244 / DSM 16087 / CCUG 44356 / LMG 19182 / AMMD) (Burkholderia cepacia (strain AMMD)).